The primary structure comprises 662 residues: Bifunctional polymyxin resistance protein ArnA (662 aa).

The formyltransferase ArnAFT stretch occupies residues 1-307 (MTSKAVVFAY…ELGLVEGARL (307 aa)). The Proton donor; for formyltransferase activity role is filled by His-106. Residues Arg-116 and 138-142 (IERAD) contribute to the (6R)-10-formyltetrahydrofolate site. The dehydrogenase ArnADH stretch occupies residues 316–662 (RRTRVLILGV…EALREREAQA (347 aa)). Residues Asp-349 and 370 to 371 (DI) each bind NAD(+). Residues Ala-395, Tyr-400, and 434–435 (TS) each bind UDP-alpha-D-glucuronate. Glu-436 (proton acceptor; for decarboxylase activity) is an active-site residue. UDP-alpha-D-glucuronate contacts are provided by residues Arg-462, Asn-493, 527–536 (RLVDGGAQKR), and Tyr-614. The active-site Proton donor; for decarboxylase activity is the Arg-620.

The protein in the N-terminal section; belongs to the Fmt family. UDP-L-Ara4N formyltransferase subfamily. In the C-terminal section; belongs to the NAD(P)-dependent epimerase/dehydratase family. UDP-glucuronic acid decarboxylase subfamily. Homohexamer, formed by a dimer of trimers.

The catalysed reaction is UDP-alpha-D-glucuronate + NAD(+) = UDP-beta-L-threo-pentopyranos-4-ulose + CO2 + NADH. It carries out the reaction UDP-4-amino-4-deoxy-beta-L-arabinose + (6R)-10-formyltetrahydrofolate = UDP-4-deoxy-4-formamido-beta-L-arabinose + (6S)-5,6,7,8-tetrahydrofolate + H(+). It functions in the pathway nucleotide-sugar biosynthesis; UDP-4-deoxy-4-formamido-beta-L-arabinose biosynthesis; UDP-4-deoxy-4-formamido-beta-L-arabinose from UDP-alpha-D-glucuronate: step 1/3. It participates in nucleotide-sugar biosynthesis; UDP-4-deoxy-4-formamido-beta-L-arabinose biosynthesis; UDP-4-deoxy-4-formamido-beta-L-arabinose from UDP-alpha-D-glucuronate: step 3/3. Its pathway is bacterial outer membrane biogenesis; lipopolysaccharide biosynthesis. Its function is as follows. Bifunctional enzyme that catalyzes the oxidative decarboxylation of UDP-glucuronic acid (UDP-GlcUA) to UDP-4-keto-arabinose (UDP-Ara4O) and the addition of a formyl group to UDP-4-amino-4-deoxy-L-arabinose (UDP-L-Ara4N) to form UDP-L-4-formamido-arabinose (UDP-L-Ara4FN). The modified arabinose is attached to lipid A and is required for resistance to polymyxin and cationic antimicrobial peptides. This chain is Bifunctional polymyxin resistance protein ArnA, found in Pseudomonas aeruginosa (strain ATCC 15692 / DSM 22644 / CIP 104116 / JCM 14847 / LMG 12228 / 1C / PRS 101 / PAO1).